The chain runs to 89 residues: Small ribosomal subunit protein uS15 (89 aa).

It belongs to the universal ribosomal protein uS15 family. In terms of assembly, part of the 30S ribosomal subunit. Forms a bridge to the 50S subunit in the 70S ribosome, contacting the 23S rRNA.

In terms of biological role, one of the primary rRNA binding proteins, it binds directly to 16S rRNA where it helps nucleate assembly of the platform of the 30S subunit by binding and bridging several RNA helices of the 16S rRNA. Functionally, forms an intersubunit bridge (bridge B4) with the 23S rRNA of the 50S subunit in the ribosome. The protein is Small ribosomal subunit protein uS15 of Caulobacter sp. (strain K31).